The sequence spans 299 residues: Oxygen-dependent coproporphyrinogen-III oxidase (299 aa).

Residue serine 92 participates in substrate binding. Mn(2+) contacts are provided by histidine 96 and histidine 106. The active-site Proton donor is histidine 106. 108 to 110 is a binding site for substrate; sequence NVR. Residues histidine 145 and histidine 175 each coordinate Mn(2+). Residues 240 to 275 are important for dimerization; sequence YVEFNLVWDRGTLFGLQTGGRTESILMSMPPLVRWE. Substrate is bound at residue 258-260; that stretch reads GGR.

It belongs to the aerobic coproporphyrinogen-III oxidase family. As to quaternary structure, homodimer. Mn(2+) serves as cofactor.

The protein resides in the cytoplasm. It catalyses the reaction coproporphyrinogen III + O2 + 2 H(+) = protoporphyrinogen IX + 2 CO2 + 2 H2O. The protein operates within porphyrin-containing compound metabolism; protoporphyrin-IX biosynthesis; protoporphyrinogen-IX from coproporphyrinogen-III (O2 route): step 1/1. In terms of biological role, involved in the heme biosynthesis. Catalyzes the aerobic oxidative decarboxylation of propionate groups of rings A and B of coproporphyrinogen-III to yield the vinyl groups in protoporphyrinogen-IX. This is Oxygen-dependent coproporphyrinogen-III oxidase from Escherichia coli O7:K1 (strain IAI39 / ExPEC).